The following is a 67-amino-acid chain: Protein AaeX (67 aa).

2 consecutive transmembrane segments (helical) span residues L3–L23 and F43–S63.

The protein belongs to the AaeX family.

The protein resides in the cell membrane. This Cronobacter sakazakii (strain ATCC BAA-894) (Enterobacter sakazakii) protein is Protein AaeX.